Reading from the N-terminus, the 207-residue chain is 8-oxoguanine DNA glycosylase/AP lyase (207 aa).

Residues Lys-129 and Asp-147 contribute to the active site.

It belongs to the type-2 OGG1 family.

It carries out the reaction 2'-deoxyribonucleotide-(2'-deoxyribose 5'-phosphate)-2'-deoxyribonucleotide-DNA = a 3'-end 2'-deoxyribonucleotide-(2,3-dehydro-2,3-deoxyribose 5'-phosphate)-DNA + a 5'-end 5'-phospho-2'-deoxyribonucleoside-DNA + H(+). Functionally, catalyzes the excision of an oxidatively damaged form of guanine (7,8-dihydro-8-oxoguanine = 8-oxoG) from DNA. Also cleaves the DNA backbone at apurinic/apyrimidinic sites (AP sites). This is 8-oxoguanine DNA glycosylase/AP lyase from Thermotoga maritima (strain ATCC 43589 / DSM 3109 / JCM 10099 / NBRC 100826 / MSB8).